An 86-amino-acid polypeptide reads, in one-letter code: Small ribosomal subunit protein bS16 (86 aa).

This sequence belongs to the bacterial ribosomal protein bS16 family.

This Myxococcus xanthus (strain DK1622) protein is Small ribosomal subunit protein bS16.